The following is a 237-amino-acid chain: MAQPILGHGSLQPASAAGLASLELDSSMDQYVQIRIFKIIVIGDSNVGKTCLTFRFCGGTFPDKTEATIGVDFREKTVEIEGEKIKVQVWDTAGQERFRKSMVEHYYRNVHAVVFVYDVTKMTSFTNLKMWIQECNGHAVPPLVPKVLVGNKCDLREQIQVPSNLALKFADAHNMLLFETSAKDPKESQNVESIFMCLACRLKAQKSLLYRDAERQQGKVQKLEFSQEANGKASCPC.

The GTP site is built by Asn46, Val47, Gly48, Lys49, Thr50, Cys51, Thr65, and Thr68. A Mg(2+)-binding site is contributed by Thr50. The Switch 1 motif lies at 59–71 (GTFPDKTEATIGV). Residues Thr68 and Asp91 each contribute to the Mg(2+) site. The Switch 2 signature appears at 92–111 (TAGQERFRKSMVEHYYRNVH). GTP contacts are provided by Gly94, Asn151, Lys152, Asp154, Ala182, and Lys183. S-geranylgeranyl cysteine attachment occurs at residues Cys235 and Cys237. Cys237 is subject to Cysteine methyl ester.

It belongs to the small GTPase superfamily. Rab family. As to quaternary structure, interacts with ATG16L1; the interaction is important for autophagosome formation. The cofactor is Mg(2+). In terms of tissue distribution, expressed predominantly in brain. Weak expression in ovary.

The protein resides in the cell membrane. The catalysed reaction is GTP + H2O = GDP + phosphate + H(+). Regulated by guanine nucleotide exchange factors (GEFs) which promote the exchange of bound GDP for free GTP. Regulated by GTPase activating proteins (GAPs) which increase the GTP hydrolysis activity. Inhibited by GDP dissociation inhibitors (GDIs). The small GTPases Rab are key regulators of intracellular membrane trafficking, from the formation of transport vesicles to their fusion with membranes. Rabs cycle between an inactive GDP-bound form and an active GTP-bound form that is able to recruit to membranes different sets of downstream effectors directly responsible for vesicle formation, movement, tethering and fusion. Modulates autophagosome formation through interaction with ATG16L1. The chain is Ras-related protein Rab-33A from Mus musculus (Mouse).